The sequence spans 268 residues: Tryptophan synthase alpha chain (268 aa).

Active-site proton acceptor residues include Glu49 and Asp60.

Belongs to the TrpA family. As to quaternary structure, tetramer of two alpha and two beta chains.

The enzyme catalyses (1S,2R)-1-C-(indol-3-yl)glycerol 3-phosphate + L-serine = D-glyceraldehyde 3-phosphate + L-tryptophan + H2O. The protein operates within amino-acid biosynthesis; L-tryptophan biosynthesis; L-tryptophan from chorismate: step 5/5. Functionally, the alpha subunit is responsible for the aldol cleavage of indoleglycerol phosphate to indole and glyceraldehyde 3-phosphate. The polypeptide is Tryptophan synthase alpha chain (Vibrio vulnificus (strain YJ016)).